The following is a 73-amino-acid chain: Protein RALF-like 10 (73 aa).

An N-terminal signal peptide occupies residues 1–17 (MKALVICLLVIFAAVIA). 2 disulfide bridges follow: C35–C44 and C64–C70.

Belongs to the plant rapid alkalinization factor (RALF) family. As to expression, expressed in flowers.

It is found in the secreted. In terms of biological role, cell signaling peptide that may regulate plant stress, growth, and development. Mediates a rapid alkalinization of extracellular space by mediating a transient increase in the cytoplasmic Ca(2+) concentration leading to a calcium-dependent signaling events through a cell surface receptor and a concomitant activation of some intracellular mitogen-activated protein kinases. In Arabidopsis thaliana (Mouse-ear cress), this protein is Protein RALF-like 10 (RALFL10).